The chain runs to 127 residues: Aspartate 1-decarboxylase (127 aa).

The active-site Schiff-base intermediate with substrate; via pyruvic acid is the Ser-25. Residue Ser-25 is modified to Pyruvic acid (Ser). Thr-57 contributes to the substrate binding site. Tyr-58 (proton donor) is an active-site residue. 73–75 (GAA) contributes to the substrate binding site.

This sequence belongs to the PanD family. Heterooctamer of four alpha and four beta subunits. It depends on pyruvate as a cofactor. Is synthesized initially as an inactive proenzyme, which is activated by self-cleavage at a specific serine bond to produce a beta-subunit with a hydroxyl group at its C-terminus and an alpha-subunit with a pyruvoyl group at its N-terminus.

Its subcellular location is the cytoplasm. The enzyme catalyses L-aspartate + H(+) = beta-alanine + CO2. It functions in the pathway cofactor biosynthesis; (R)-pantothenate biosynthesis; beta-alanine from L-aspartate: step 1/1. Functionally, catalyzes the pyruvoyl-dependent decarboxylation of aspartate to produce beta-alanine. This is Aspartate 1-decarboxylase from Listeria monocytogenes serotype 4b (strain CLIP80459).